The chain runs to 237 residues: Uridylate kinase (237 aa).

Position 11-14 (11-14) interacts with ATP; the sequence is KLSG. Gly-52 is a binding site for UMP. ATP is bound by residues Gly-53 and Arg-57. UMP is bound by residues Asp-72 and 134 to 141; that span reads TGYSYFTT. Asn-162, Tyr-168, and Asp-171 together coordinate ATP.

This sequence belongs to the UMP kinase family. Homohexamer.

The protein localises to the cytoplasm. The enzyme catalyses UMP + ATP = UDP + ADP. It participates in pyrimidine metabolism; CTP biosynthesis via de novo pathway; UDP from UMP (UMPK route): step 1/1. With respect to regulation, inhibited by UTP. Its function is as follows. Catalyzes the reversible phosphorylation of UMP to UDP. The polypeptide is Uridylate kinase (Mycoplasma capricolum subsp. capricolum (strain California kid / ATCC 27343 / NCTC 10154)).